A 345-amino-acid chain; its full sequence is MFIAVEVSPVMEDITRQSKKTSVENETGDDQSATSVVLKAKRKRRSQPRDAPPQRSSVHRGVTRHRWTGRYEAHLWDKNSWNETQTKKGRQVYLGAYDEEDAAARAYDLAALKYWGRDTILNFPLCNYEEDIKEMESQSKEEYIGSLRRKSSGFSRGVSKYRGVAKHHHNGRWEARIGRVFGNKYLYLGTYATQEEAAIAYDIAAIEYRGLNAVTNFDISRYLKLPVPENPIDTANNLLESPHSDLSPFIKPNHESDLSQSQSSSEDNDDRKTKLLKSSPLVAEEVIGPSTPPEIAPPRRSFPEDIQTYFGCQNSGKLTAEEDDVIFGDLDSFLTPDFYSELNDC.

The segment at 15–62 (TRQSKKTSVENETGDDQSATSVVLKAKRKRRSQPRDAPPQRSSVHRGV) is disordered. DNA-binding regions (AP2/ERF) lie at residues 58-124 (VHRG…LNFP) and 160-218 (KYRG…TNFD). A disordered region spans residues 243 to 302 (HSDLSPFIKPNHESDLSQSQSSSEDNDDRKTKLLKSSPLVAEEVIGPSTPPEIAPPRRSF).

The protein belongs to the AP2/ERF transcription factor family. AP2 subfamily.

The protein localises to the nucleus. Its function is as follows. Probably acts as a transcriptional activator. Binds to the GCC-box pathogenesis-related promoter element. May be involved in the regulation of gene expression by stress factors and by components of stress signal transduction pathways. The protein is AP2-like ethylene-responsive transcription factor At1g16060 of Arabidopsis thaliana (Mouse-ear cress).